The primary structure comprises 277 residues: Diaminopimelate epimerase (277 aa).

The substrate site is built by N11 and N72. C81 acts as the Proton donor in catalysis. Substrate contacts are provided by residues 82-83 (GN), N189, and 207-208 (ER). The Proton acceptor role is filled by C217. 218–219 (GT) contacts substrate.

This sequence belongs to the diaminopimelate epimerase family. As to quaternary structure, homodimer.

The protein resides in the cytoplasm. The enzyme catalyses (2S,6S)-2,6-diaminopimelate = meso-2,6-diaminopimelate. The protein operates within amino-acid biosynthesis; L-lysine biosynthesis via DAP pathway; DL-2,6-diaminopimelate from LL-2,6-diaminopimelate: step 1/1. Its function is as follows. Catalyzes the stereoinversion of LL-2,6-diaminopimelate (L,L-DAP) to meso-diaminopimelate (meso-DAP), a precursor of L-lysine and an essential component of the bacterial peptidoglycan. The chain is Diaminopimelate epimerase from Hydrogenobaculum sp. (strain Y04AAS1).